The sequence spans 1370 residues: Putative surface protein SA2285 (1370 aa).

The first 50 residues, M1–A50, serve as a signal peptide directing secretion. Disordered stretches follow at residues N77 to P116, K439 to T472, and E495 to E1344. Basic and acidic residues-rich tracts occupy residues D96 to P116, K450 to K460, G504 to P522, S553 to N569, K578 to K588, S605 to I618, G632 to P650, S681 to N697, K706 to K716, S733 to I746, G760 to P778, S809 to N825, K834 to K844, S861 to I874, G888 to P906, S937 to N953, K962 to K972, S989 to I1002, G1016 to P1034, S1065 to N1081, K1090 to K1100, S1117 to V1130, K1174 to K1185, and F1202 to Q1221. The G5 1 domain occupies S418–T500. Residues Y546–T628 form the G5 2 domain. The G5 3 domain occupies Y674–T756. The region spanning Y802–T884 is the G5 4 domain. A G5 5 domain is found at Y930–T1012. Positions Y1058 to K1140 constitute a G5 6 domain. The G5 7 domain maps to H1186–K1268. Polar residues predominate over residues Q1224–P1238. The segment covering E1252 to S1282 has biased composition (basic and acidic residues). An LPXTG sorting signal motif is present at residues L1338–G1342. T1341 bears the Pentaglycyl murein peptidoglycan amidated threonine mark. Positions G1342 to N1370 are cleaved as a propeptide — removed by sortase.

The protein localises to the secreted. It is found in the cell wall. The polypeptide is Putative surface protein SA2285 (Staphylococcus aureus (strain N315)).